Reading from the N-terminus, the 318-residue chain is Porphobilinogen deaminase (318 aa).

Position 241 is an S-(dipyrrolylmethanemethyl)cysteine (Cys-241).

Belongs to the HMBS family. In terms of assembly, monomer. Requires dipyrromethane as cofactor.

The enzyme catalyses 4 porphobilinogen + H2O = hydroxymethylbilane + 4 NH4(+). Its pathway is porphyrin-containing compound metabolism; protoporphyrin-IX biosynthesis; coproporphyrinogen-III from 5-aminolevulinate: step 2/4. Its function is as follows. Tetrapolymerization of the monopyrrole PBG into the hydroxymethylbilane pre-uroporphyrinogen in several discrete steps. This is Porphobilinogen deaminase from Citrifermentans bemidjiense (strain ATCC BAA-1014 / DSM 16622 / JCM 12645 / Bem) (Geobacter bemidjiensis).